Here is a 483-residue protein sequence, read N- to C-terminus: Zinc metalloproteinase/disintegrin (483 aa).

A signal peptide spans 1–20; the sequence is MIQVLLVTICLAVFPYQGSS. The propeptide occupies 21–190; sequence IILESGNVND…KASQLYLTPE (170 aa). A Peptidase M12B domain is found at 197-395; sequence RYIELAIVVD…RNPQCILNAP (199 aa). Glutamate 200 is a Ca(2+) binding site. A glycan (N-linked (GlcNAc...) asparagine) is linked at asparagine 263. Aspartate 284 is a binding site for Ca(2+). N-linked (GlcNAc...) asparagine glycosylation is present at asparagine 293. 3 disulfide bridges follow: cysteine 308–cysteine 390, cysteine 352–cysteine 374, and cysteine 354–cysteine 357. Zn(2+) is bound at residue histidine 333. Glutamate 334 is an active-site residue. The Zn(2+) site is built by histidine 337 and histidine 343. Residues cysteine 390 and asparagine 393 each coordinate Ca(2+). Residues 396-413 constitute a propeptide that is removed on maturation; the sequence is LRTDTVSTPVSGNEFLEA. Residues 403 to 483 form the Disintegrin domain; that stretch reads TPVSGNEFLE…SNDCPRWNDL (81 aa). Cystine bridges form between cysteine 417–cysteine 432, cysteine 419–cysteine 427, cysteine 426–cysteine 449, cysteine 440–cysteine 446, cysteine 445–cysteine 470, and cysteine 458–cysteine 477. Residues 462-464 carry the Cell attachment site motif; it reads RGD.

It belongs to the venom metalloproteinase (M12B) family. P-II subfamily. P-IIa sub-subfamily. In terms of assembly, monomeric (disintegrin). Zn(2+) is required as a cofactor. In terms of tissue distribution, expressed by the venom gland.

The protein resides in the secreted. Impairs hemostasis in the envenomed animal. Functionally, inhibits platelet aggregation induced by ADP, thrombin, platelet-activating factor and collagen. Acts by inhibiting fibrinogen interaction with platelet receptors GPIIb/GPIIIa (ITGA2B/ITGB3). The chain is Zinc metalloproteinase/disintegrin from Protobothrops flavoviridis (Habu).